Consider the following 258-residue polypeptide: NAD-dependent protein deacylase (258 aa).

One can recognise a Deacetylase sirtuin-type domain in the interval 3–258 (ERQLEKSIEH…LPALMRGLSA (256 aa)). 28-48 (GAGMSADSGLETYRDDKTGLW) is a binding site for NAD(+). Residues Tyr-73 and Arg-76 each contribute to the substrate site. 109 to 112 (QNID) contacts NAD(+). His-127 acts as the Proton acceptor in catalysis. The Zn(2+) site is built by Cys-135, Cys-138, Cys-161, and Cys-164. Residues 201-203 (GTS) and Ala-245 each bind NAD(+).

The protein belongs to the sirtuin family. Class III subfamily. Zn(2+) serves as cofactor.

Its subcellular location is the cytoplasm. The catalysed reaction is N(6)-acetyl-L-lysyl-[protein] + NAD(+) + H2O = 2''-O-acetyl-ADP-D-ribose + nicotinamide + L-lysyl-[protein]. The enzyme catalyses N(6)-succinyl-L-lysyl-[protein] + NAD(+) + H2O = 2''-O-succinyl-ADP-D-ribose + nicotinamide + L-lysyl-[protein]. In terms of biological role, NAD-dependent lysine deacetylase and desuccinylase that specifically removes acetyl and succinyl groups on target proteins. Modulates the activities of several proteins which are inactive in their acylated form. The chain is NAD-dependent protein deacylase from Corynebacterium glutamicum (strain ATCC 13032 / DSM 20300 / JCM 1318 / BCRC 11384 / CCUG 27702 / LMG 3730 / NBRC 12168 / NCIMB 10025 / NRRL B-2784 / 534).